We begin with the raw amino-acid sequence, 475 residues long: 1,3-beta-glucanosyltransferase gel2 (475 aa).

The signal sequence occupies residues 1 to 21 (MLPTYVRLFTAVCALATTASA). Cysteines 69 and 98 form a disulfide. (1,3-beta-D-glucosyl)n-binding residues include tyrosine 87, asparagine 159, glutamate 160, and aspartate 201. Glutamate 160 serves as the catalytic Proton donor. 2 disulfide bridges follow: cysteine 215–cysteine 350 and cysteine 234–cysteine 265. The N-linked (GlcNAc...) asparagine glycan is linked to asparagine 236. Glutamate 262 acts as the Nucleophile in catalysis. Tyrosine 294 contacts (1,3-beta-D-glucosyl)n. Residues asparagine 311, asparagine 339, and asparagine 357 are each glycosylated (N-linked (GlcNAc...) asparagine). Positions 420 to 451 (GESNTPGAHSSGSTSGSSSSGGSSSSSSDKES) are disordered. Positions 429–446 (SSGSTSGSSSSGGSSSSS) are enriched in low complexity. A lipid anchor (GPI-like-anchor amidated serine) is attached at serine 451. Residues 452-475 (AAGTISVPFVGLLSAASFMAFFML) constitute a propeptide, removed in mature form.

Belongs to the glycosyl hydrolase 72 family. The GPI-like anchor contains a phosphoceramide lipid group.

The protein localises to the cell membrane. Functionally, splits internally a 1,3-beta-glucan molecule and transfers the newly generated reducing end (the donor) to the non-reducing end of another 1,3-beta-glucan molecule (the acceptor) forming a 1,3-beta linkage, resulting in the elongation of 1,3-beta-glucan chains in the cell wall. Involved in cell wall morphogenesis. The sequence is that of 1,3-beta-glucanosyltransferase gel2 (gel2) from Aspergillus fumigatus (strain CBS 144.89 / FGSC A1163 / CEA10) (Neosartorya fumigata).